The primary structure comprises 337 residues: tRNA N6-adenosine threonylcarbamoyltransferase (337 aa).

The Fe cation site is built by H111 and H115. Substrate is bound by residues 134–138, D167, G180, and N272; that span reads LVSGG. D300 contributes to the Fe cation binding site.

Belongs to the KAE1 / TsaD family. It depends on Fe(2+) as a cofactor.

The protein resides in the cytoplasm. The enzyme catalyses L-threonylcarbamoyladenylate + adenosine(37) in tRNA = N(6)-L-threonylcarbamoyladenosine(37) in tRNA + AMP + H(+). Its function is as follows. Required for the formation of a threonylcarbamoyl group on adenosine at position 37 (t(6)A37) in tRNAs that read codons beginning with adenine. Is involved in the transfer of the threonylcarbamoyl moiety of threonylcarbamoyl-AMP (TC-AMP) to the N6 group of A37, together with TsaE and TsaB. TsaD likely plays a direct catalytic role in this reaction. The sequence is that of tRNA N6-adenosine threonylcarbamoyltransferase from Erwinia tasmaniensis (strain DSM 17950 / CFBP 7177 / CIP 109463 / NCPPB 4357 / Et1/99).